The chain runs to 120 residues: Xibalbin-1 (120 aa).

Residues 1 to 21 form the signal peptide; it reads MISKILIAACALLLISHLVLA. Residues 22–63 constitute a propeptide that is removed on maturation; that stretch reads VPYLEDGLNSLHNRTGESDETRGYTIQLLKEMPEDDAVEDYS. Intrachain disulfides connect Cys79/Cys94, Cys86/Cys99, Cys93/Cys110, and Cys101/Cys108.

This sequence belongs to the xibalbin-1 family. Expressed by the venom gland. Not found in the whole body.

The protein resides in the secreted. Probable neurotoxin. Strongly inhibits voltage-gated potassium channels (Kv1.1/KCNA1, Kv1.2/KCNA2, Kv1.3/KCNA3, and Kv1.6/KCNA6, with the highest toxicity against Kv1.6 (74% inhibition at 1 uM)) and mildly inhibits sodium channels (Nav1.2/SCN2A, Nav1.4/SCN4A, Nav1.5/SCN5A, Nav1.6/SCN8A, and BgNav). Induces activation of protein kinase A type II (PKA-II) and MAP kinase Erk1/2 in primary nociceptive and non-nociceptive sensory neurons. Does not show cytotoxic activity. Does not have an impact on Ca2+, cAMP, and NO signaling in the cell types analyzed. Does not interfere with the adhesion of leukocytes to endothelial cells. This Xibalbanus tulumensis (Blind cave remipede) protein is Xibalbin-1.